The following is a 132-amino-acid chain: Small ribosomal subunit protein bS6 (132 aa).

Belongs to the bacterial ribosomal protein bS6 family.

Its function is as follows. Binds together with bS18 to 16S ribosomal RNA. This is Small ribosomal subunit protein bS6 from Chlorobium chlorochromatii (strain CaD3).